The primary structure comprises 337 residues: Putative carbonic anhydrase-like protein 2 (337 aa).

A signal peptide spans 1–16 (MIPWLLTACIYPCVIG). Positions 17–274 (PDFWGLLHGD…LNGRLVRTNI (258 aa)) constitute an Alpha-carbonic anhydrase domain. Tyrosine 140 is a catalytic residue. N-linked (GlcNAc...) asparagine glycosylation occurs at asparagine 188. Residue 212–213 (TF) participates in substrate binding.

The protein belongs to the alpha-carbonic anhydrase family.

The protein resides in the secreted. This chain is Putative carbonic anhydrase-like protein 2 (cah-2), found in Caenorhabditis elegans.